The following is a 370-amino-acid chain: Flagellar P-ring protein 1 (370 aa).

The N-terminal stretch at 1 to 25 is a signal peptide; that stretch reads MSVLIKTRHCFVLLGLWLVLPTASA.

This sequence belongs to the FlgI family. In terms of assembly, the basal body constitutes a major portion of the flagellar organelle and consists of four rings (L,P,S, and M) mounted on a central rod.

It localises to the periplasm. It is found in the bacterial flagellum basal body. Its function is as follows. Assembles around the rod to form the L-ring and probably protects the motor/basal body from shearing forces during rotation. In Yersinia pestis, this protein is Flagellar P-ring protein 1.